The following is a 68-amino-acid chain: Translational regulator CsrA 1 (68 aa).

Belongs to the CsrA/RsmA family. In terms of assembly, homodimer; the beta-strands of each monomer intercalate to form a hydrophobic core, while the alpha-helices form wings that extend away from the core.

The protein localises to the cytoplasm. Functionally, a key translational regulator that binds mRNA to regulate translation initiation and/or mRNA stability. Mediates global changes in gene expression, shifting from rapid growth to stress survival by linking envelope stress, the stringent response and the catabolite repression systems. Usually binds in the 5'-UTR; binding at or near the Shine-Dalgarno sequence prevents ribosome-binding, repressing translation, binding elsewhere in the 5'-UTR can activate translation and/or stabilize the mRNA. Its function is antagonized by small RNA(s). This chain is Translational regulator CsrA 1, found in Coxiella burnetii (strain RSA 493 / Nine Mile phase I).